The primary structure comprises 550 residues: Metal transporter Nramp4 (550 aa).

The segment covering 1-13 (MEEGAKIGREHEQ) has biased composition (basic and acidic residues). The disordered stretch occupies residues 1–37 (MEEGAKIGREHEQQQQQHGRVNGSGRVAAVGGGSGGG). Residues 14–29 (QQQQHGRVNGSGRVAA) are compositionally biased toward low complexity. 12 helical membrane-spanning segments follow: residues 72–92 (FLAHVGPGFVISIAYLDPSNL), 105–125 (SLLWVLLFGFIFVLTVQSLAA), 151–171 (LWLLAELGVIAATIPGVLGTA), 177–197 (LLHIPFWAGVLACGACTFLIL), 207–227 (MEFTISVLMLVMATCFFMELG), 255–275 (VAMFGSLVVPHNLFLHSSLVL), 292–312 (FFLLENALALFIALLVNVAIV), 354–374 (VYGVALLVSGQSCMVATSYAG), 388–408 (IIYLVAPCFTLLPSLIICSIG), 416–436 (IINIAAIVLSFVLPFALIPLI), 457–477 (IAWILSLVIIGINIYFFCTSF), and 492–512 (AIISSLVFPFMAAYIAALIYL).

Belongs to the NRAMP (TC 2.A.55) family.

It is found in the membrane. Its function is as follows. Probable metal transporter. This Oryza sativa subsp. japonica (Rice) protein is Metal transporter Nramp4 (NRAMP4).